A 1343-amino-acid polypeptide reads, in one-letter code: DNA-directed RNA polymerase subunit beta (1343 aa).

The protein belongs to the RNA polymerase beta chain family. In terms of assembly, the RNAP catalytic core consists of 2 alpha, 1 beta, 1 beta' and 1 omega subunit. When a sigma factor is associated with the core the holoenzyme is formed, which can initiate transcription.

The catalysed reaction is RNA(n) + a ribonucleoside 5'-triphosphate = RNA(n+1) + diphosphate. In terms of biological role, DNA-dependent RNA polymerase catalyzes the transcription of DNA into RNA using the four ribonucleoside triphosphates as substrates. This is DNA-directed RNA polymerase subunit beta from Haemophilus influenzae (strain 86-028NP).